A 256-amino-acid chain; its full sequence is Triosephosphate isomerase (256 aa).

Asn9–Lys11 contributes to the substrate binding site. His97 serves as the catalytic Electrophile. Glu169 functions as the Proton acceptor in the catalytic mechanism. Substrate contacts are provided by residues Gly175, Ser214, and Gly235–Gly236.

The protein belongs to the triosephosphate isomerase family. In terms of assembly, homodimer.

It is found in the cytoplasm. It catalyses the reaction D-glyceraldehyde 3-phosphate = dihydroxyacetone phosphate. It participates in carbohydrate biosynthesis; gluconeogenesis. It functions in the pathway carbohydrate degradation; glycolysis; D-glyceraldehyde 3-phosphate from glycerone phosphate: step 1/1. Its function is as follows. Involved in the gluconeogenesis. Catalyzes stereospecifically the conversion of dihydroxyacetone phosphate (DHAP) to D-glyceraldehyde-3-phosphate (G3P). The polypeptide is Triosephosphate isomerase (Vibrio vulnificus (strain CMCP6)).